A 232-amino-acid polypeptide reads, in one-letter code: Large ribosomal subunit protein uL1 (232 aa).

Belongs to the universal ribosomal protein uL1 family. In terms of assembly, part of the 50S ribosomal subunit.

In terms of biological role, binds directly to 23S rRNA. The L1 stalk is quite mobile in the ribosome, and is involved in E site tRNA release. Functionally, protein L1 is also a translational repressor protein, it controls the translation of the L11 operon by binding to its mRNA. The polypeptide is Large ribosomal subunit protein uL1 (Xanthomonas oryzae pv. oryzae (strain MAFF 311018)).